The chain runs to 141 residues: Alpha-lactalbumin (141 aa).

Residues 1–19 (MMSFVSLLVVGILFPAIQA) form the signal peptide. The region spanning 20–141 (KQFTKCELSQ…KLDQWLCEKM (122 aa)) is the C-type lysozyme domain. 4 disulfide bridges follow: Cys-25-Cys-138, Cys-47-Cys-129, Cys-80-Cys-95, and Cys-91-Cys-109. The Ca(2+) site is built by Lys-97, Asp-100, Asp-102, Asp-105, and Asp-106.

This sequence belongs to the glycosyl hydrolase 22 family. In terms of assembly, lactose synthase (LS) is a heterodimer of a catalytic component, beta1,4-galactosyltransferase (beta4Gal-T1) and a regulatory component, alpha-lactalbumin (LA). In terms of tissue distribution, mammary gland specific. Secreted in milk.

It is found in the secreted. Functionally, regulatory subunit of lactose synthase, changes the substrate specificity of galactosyltransferase in the mammary gland making glucose a good acceptor substrate for this enzyme. This enables LS to synthesize lactose, the major carbohydrate component of milk. In other tissues, galactosyltransferase transfers galactose onto the N-acetylglucosamine of the oligosaccharide chains in glycoproteins. The polypeptide is Alpha-lactalbumin (LALBA) (Sus scrofa (Pig)).